The following is a 284-amino-acid chain: Homeobox protein six1b (284 aa).

Residues 124–183 (GEETSYCFKEKSRGVLREWYTHNPYPSPREKRELAEATGLTTTQVSNWFKNRRQRDRAAE) constitute a DNA-binding region (homeobox). The interval 167–238 (QVSNWFKNRR…NSVLLLQGNM (72 aa)) is disordered. Over residues 179–190 (DRAAEAKERENS) the composition is skewed to basic and acidic residues. Polar residues-rich tracts occupy residues 191-204 (ENNN…NQLS) and 226-238 (PDQN…QGNM).

This sequence belongs to the SIX/Sine oculis homeobox family. Interacts with eya1.

The protein resides in the nucleus. The protein localises to the cytoplasm. Functionally, transcription factor that is involved in the regulation of cell proliferation, apoptosis and embryonic development. Depending on context, functions as a transcriptional repressor or activator. Transcriptional activation is enhanced by eya1 (in vitro). Plays an important role in the development of the inner ear, where it promotes hair cell proliferation and inhibits proliferation of neural progenitor cells. Required for normal myogenesis. Plays a role in the development of fast muscle fibers throughout the body, as well as the development of craniofacial muscles. Required for normal expression of myod1 and myog during myogenesis. The polypeptide is Homeobox protein six1b (six1b) (Danio rerio (Zebrafish)).